A 400-amino-acid chain; its full sequence is Tryptophan synthase beta chain (400 aa).

An N6-(pyridoxal phosphate)lysine modification is found at Lys91.

This sequence belongs to the TrpB family. Tetramer of two alpha and two beta chains. Requires pyridoxal 5'-phosphate as cofactor.

It carries out the reaction (1S,2R)-1-C-(indol-3-yl)glycerol 3-phosphate + L-serine = D-glyceraldehyde 3-phosphate + L-tryptophan + H2O. It participates in amino-acid biosynthesis; L-tryptophan biosynthesis; L-tryptophan from chorismate: step 5/5. The beta subunit is responsible for the synthesis of L-tryptophan from indole and L-serine. In Listeria monocytogenes serotype 4a (strain HCC23), this protein is Tryptophan synthase beta chain.